The following is a 366-amino-acid chain: Methyltransferase phm5 (366 aa).

S-adenosyl-L-methionine-binding positions include 204–205, Asp230, 255–256, Arg273, and Arg274; these read GG and SM.

This sequence belongs to the class I-like SAM-binding methyltransferase superfamily. Cation-independent O-methyltransferase family.

The protein operates within secondary metabolite biosynthesis. Methyltransferase; part of the gene cluster that mediates the biosynthesis of the trans-fused decalin-containing tetramic acid phomasetin, the stereochemical opposite of the HIV-1 integrase inhibitor equisetin. The PKS module of phm1 together with the enoylreductase phm4 catalyze the formation of the polyketide unit which is then conjugated to L-serine by the condensation domain of the phm1 NRPS module. Activity of the Dieckmann cyclase domain (RED) of phm1 results in release of the Dieckmann product intermediate. The Diels-Alderase phm7 then uses the Dieckmann product of phm1 as substrate and catalyzes the Diels-Alder cycloaddition to form the decalin ring of N-desmethylphomasetin. N-desmethylphomasetin is further methylated to phomasetin by the methyltransferase phm5. The protein is Methyltransferase phm5 of Pyrenochaetopsis sp.